The primary structure comprises 150 residues: MATSLLSPLLVAMLGFLLHVHVARAGLEHTCTLETRMQGAHPQGICGSKLPDIVHTVCQVMGRGYAGGQRQLRKRTSMIDSDDMEAEGGSRGGFLMSKRRALSYLQKETNPLVMAGYERRGIQKRHGEQGITCECCYNHCSFRELVQYCN.

The signal sequence occupies residues 1–25 (MATSLLSPLLVAMLGFLLHVHVARA). 4 disulfide bridges follow: C31–C133, C46–C136, C58–C149, and C135–C140. Positions 64 to 111 (GYAGGQRQLRKRTSMIDSDDMEAEGGSRGGFLMSKRRALSYLQKETNP) are cleaved as a propeptide — c peptide. E144 carries the post-translational modification 4-carboxyglutamate; partial.

Belongs to the insulin family. As to quaternary structure, heterodimer of A and B chains; disulfide-linked. As to expression, expressed by the venom gland.

The protein resides in the secreted. Functionally, this venom insulin facilitates prey capture by rapidly inducing hypoglycemic shock. Intraperitoneal injection of this peptide into zebrafish lowers blood glucose with the same potency than human insulin. In vivo, when applied to water, this peptide reduces overall locomotor activity of zebrafish larvae, observed as a significant decrease in the percentage of time spent swimming and movement frequency. This chain is Con-Ins Im1, found in Conus imperialis (Imperial cone).